A 267-amino-acid polypeptide reads, in one-letter code: MSIPTPYEDLLRDVLANGTHKSDRTGTGTLSVFGRQMRFDLSQSFPLITTKRVHFKSVAVELLWFLRGETNVKWMQDQGVTIWNEWADADGELGPVYGVQWRSWPTPDGGHIDQIAELVENLKSNPDSRRHIVSAWNVAELQDMALPPCHAFFQFYVADGKLSCQLYQRSADTFLGVPFNIASYALLTCMLAQQVGLEPGEFVWTGGDVHIYDNHMDQVLKQLKREPYEYPQLKILRKPDSIFDYTLDDFEVVGYQHHPTIKAPIAV.

R24 contributes to the dUMP binding site. Residue H54 coordinates (6R)-5,10-methylene-5,6,7,8-tetrahydrofolate. 129-130 is a binding site for dUMP; that stretch reads RR. The active-site Nucleophile is C149. DUMP-binding positions include 169-172, N180, and 210-212; these read RSAD and HIY. Position 172 (D172) interacts with (6R)-5,10-methylene-5,6,7,8-tetrahydrofolate. Residue A266 coordinates (6R)-5,10-methylene-5,6,7,8-tetrahydrofolate.

This sequence belongs to the thymidylate synthase family. Bacterial-type ThyA subfamily. Homodimer.

It localises to the cytoplasm. It carries out the reaction dUMP + (6R)-5,10-methylene-5,6,7,8-tetrahydrofolate = 7,8-dihydrofolate + dTMP. It participates in pyrimidine metabolism; dTTP biosynthesis. Functionally, catalyzes the reductive methylation of 2'-deoxyuridine-5'-monophosphate (dUMP) to 2'-deoxythymidine-5'-monophosphate (dTMP) while utilizing 5,10-methylenetetrahydrofolate (mTHF) as the methyl donor and reductant in the reaction, yielding dihydrofolate (DHF) as a by-product. This enzymatic reaction provides an intracellular de novo source of dTMP, an essential precursor for DNA biosynthesis. The sequence is that of Thymidylate synthase from Arthrobacter sp. (strain FB24).